A 195-amino-acid chain; its full sequence is Heavy metal-associated isoprenylated plant protein 18 (195 aa).

2 disordered regions span residues 36 to 76 and 145 to 172; these read DVVQ…KPET and EKEKKDDEPITKDEENEIDRGVYMNPSS. 2 stretches are compositionally biased toward basic and acidic residues: residues 47-76 and 145-157; these read TVTKKNEEGDIVDKKDETPEVEEKIDKPET and EKEKKDDEPITKD. Positions 78 to 149 constitute an HMA domain; the sequence is TRKLEIHIAF…RIVKMEKEKK (72 aa). Cys192 carries the post-translational modification Cysteine methyl ester. A lipid anchor (S-farnesyl cysteine) is attached at Cys192. The propeptide at 193–195 is removed in mature form; it reads SIS.

It belongs to the HIPP family.

Its function is as follows. Probable heavy-metal-binding protein. Required for female gametophyte development and function. The chain is Heavy metal-associated isoprenylated plant protein 18 from Arabidopsis thaliana (Mouse-ear cress).